A 441-amino-acid chain; its full sequence is ACT domain-containing protein ACR8 (441 aa).

ACT domains are found at residues 34–110 (IVKV…NIEV), 115–196 (ALEL…SAAK), 248–324 (VVNV…ALEG), and 326–405 (RLEL…TMYH).

Expressed in roots, leaves, flowers and siliques.

Its function is as follows. May bind amino acids. The chain is ACT domain-containing protein ACR8 from Arabidopsis thaliana (Mouse-ear cress).